The primary structure comprises 449 residues: MLETPKVLLKNLQDCKIHFIGIGGIGISGLAKYLKAQGATISGSDIAISPSVKYLKALGVEINIPHDPKAINNQDVIIHSAIIKEDNKEIQRAKELEIPILSRKDALYSILKDKRVFSVCGAHGKSSITAMLSAICPSFGAIIGAHSKEFDSNVRESANDSLVFEADESDSSFLFSNPYAAIVPNTEPEHLEHYGHDLERFFFAYEYFLDHAQKRVIYKEDPFLKNYSKNAIVLEKKDIYNIQYILKDGEPYTSFELKDLGAFLVWGLGEHNATNASLAILSALDELHLEEIRNNLLNFKGIKKRFDILQKNALILIDDYAHHPTEISATLKSARIYANLLNTQEKIIVIWQAHKYSRLMDNLEEFKKCFSEHCDRLIILPVYSASEVKRDIDLKAHFKHYNPTFIDRVRKKGDFLELLVNDNVVETIEKGFVIGFGAGDITYQLRGEM.

121–127 provides a ligand contact to ATP; it reads GAHGKSS.

This sequence belongs to the MurCDEF family.

It is found in the cytoplasm. The catalysed reaction is UDP-N-acetyl-alpha-D-muramate + L-alanine + ATP = UDP-N-acetyl-alpha-D-muramoyl-L-alanine + ADP + phosphate + H(+). It participates in cell wall biogenesis; peptidoglycan biosynthesis. In terms of biological role, cell wall formation. In Helicobacter pylori (strain ATCC 700392 / 26695) (Campylobacter pylori), this protein is UDP-N-acetylmuramate--L-alanine ligase.